The primary structure comprises 337 residues: Oxidoreductase andH (337 aa).

The protein belongs to the NmrA-type oxidoreductase family.

The protein operates within secondary metabolite biosynthesis; terpenoid biosynthesis. Oxidoreductase; part of the gene cluster that mediates the biosynthesis of anditomin, a fungal meroterpenoid. The first step of the pathway is the synthesis of 3,5-dimethylorsellinic acid (DMOA) by the polyketide synthase andM. DMOA is then converted to the phthalide compound 5,7-dihydroxy-4,6-dimethylphthalide (DHDMP) by the cytochrome P450 monooxygenase andK, which is further prenylated by the prenyltransferase andD to yield farnesyl-DHDMP. Further epoxidation by the FAD-dependent monooxygenase andE leads to epoxyfarnesyl-DHDMP. The next step involves the terpene cyclase andB that converts epoxyfarnesyl-DHDMP into preandiloid A through opening of the epoxide ring followed by the cyclization of the farnesyl moiety. Preandiloid A is in turn oxidized at the C-3 hydroxyl group to yield preandiloid B by the dehydrogenase andC. The dioxygenase andA is solely responsible for the dehydrogenation of preandiloid B leading to the enone preandiloid C, as well as for the intriguing structural rearrangement to generate the bicyclo[2.2.2]octane core, transforming preandiloid C into andiconin. FAD-binding monooxygenase andJ then produces andilesin D which is reduced by dehydrogenase andI to yield andilesin A. Action of acetyltransferase andG followed by a spontaneous acetate elimination leads then to andilesin B, which is in turn substrate of the short chain dehydrogenase andH to yield andilesin C. Finally, the dioxygenase andF catalyzes the transformation of andilesin C to anditomin. The chain is Oxidoreductase andH from Emericella variicolor (Aspergillus stellatus).